The following is a 471-amino-acid chain: Tryptophanase (471 aa).

N6-acetyllysine occurs at positions 5, 115, and 156. Lysine 270 carries the post-translational modification N6-(pyridoxal phosphate)lysine. Lysine 450 bears the N6-acetyllysine mark.

The protein belongs to the beta-eliminating lyase family. Homotetramer. Pyridoxal 5'-phosphate is required as a cofactor.

The catalysed reaction is L-tryptophan + H2O = indole + pyruvate + NH4(+). The protein operates within amino-acid degradation; L-tryptophan degradation via pyruvate pathway; indole and pyruvate from L-tryptophan: step 1/1. The chain is Tryptophanase from Escherichia coli (strain SMS-3-5 / SECEC).